Reading from the N-terminus, the 501-residue chain is Glycerol kinase (501 aa).

Residue threonine 12 participates in ADP binding. ATP-binding residues include threonine 12, threonine 13, and serine 14. Residue threonine 12 coordinates sn-glycerol 3-phosphate. Position 16 (arginine 16) interacts with ADP. Sn-glycerol 3-phosphate contacts are provided by arginine 82, glutamate 83, tyrosine 135, and aspartate 244. Arginine 82, glutamate 83, tyrosine 135, aspartate 244, and glutamine 245 together coordinate glycerol. Residues threonine 266, glycine 309, glycine 409, and asparagine 413 each contribute to the ADP site. Residues threonine 266, glycine 309, and glycine 409 each contribute to the ATP site.

This sequence belongs to the FGGY kinase family.

It catalyses the reaction glycerol + ATP = sn-glycerol 3-phosphate + ADP + H(+). Its pathway is polyol metabolism; glycerol degradation via glycerol kinase pathway; sn-glycerol 3-phosphate from glycerol: step 1/1. Inhibited by fructose 1,6-bisphosphate (FBP). Functionally, key enzyme in the regulation of glycerol uptake and metabolism. Catalyzes the phosphorylation of glycerol to yield sn-glycerol 3-phosphate. This chain is Glycerol kinase, found in Coxiella burnetii (strain RSA 331 / Henzerling II).